Reading from the N-terminus, the 489-residue chain is Glycogen synthase (489 aa).

Lysine 15 contributes to the ADP-alpha-D-glucose binding site.

This sequence belongs to the glycosyltransferase 1 family. Bacterial/plant glycogen synthase subfamily.

The catalysed reaction is [(1-&gt;4)-alpha-D-glucosyl](n) + ADP-alpha-D-glucose = [(1-&gt;4)-alpha-D-glucosyl](n+1) + ADP + H(+). It functions in the pathway glycan biosynthesis; glycogen biosynthesis. Its function is as follows. Synthesizes alpha-1,4-glucan chains using ADP-glucose. This chain is Glycogen synthase, found in Francisella tularensis subsp. tularensis (strain SCHU S4 / Schu 4).